The primary structure comprises 272 residues: Putative pyruvate, phosphate dikinase regulatory protein (272 aa).

151–158 (GISRTSKT) provides a ligand contact to ADP.

Belongs to the pyruvate, phosphate/water dikinase regulatory protein family. PDRP subfamily.

It carries out the reaction N(tele)-phospho-L-histidyl/L-threonyl-[pyruvate, phosphate dikinase] + ADP = N(tele)-phospho-L-histidyl/O-phospho-L-threonyl-[pyruvate, phosphate dikinase] + AMP + H(+). The catalysed reaction is N(tele)-phospho-L-histidyl/O-phospho-L-threonyl-[pyruvate, phosphate dikinase] + phosphate + H(+) = N(tele)-phospho-L-histidyl/L-threonyl-[pyruvate, phosphate dikinase] + diphosphate. Bifunctional serine/threonine kinase and phosphorylase involved in the regulation of the pyruvate, phosphate dikinase (PPDK) by catalyzing its phosphorylation/dephosphorylation. This is Putative pyruvate, phosphate dikinase regulatory protein from Staphylococcus aureus (strain USA300).